The chain runs to 273 residues: Cell division protein ZipA (273 aa).

Residue Met1 is a topological domain, periplasmic. A helical transmembrane segment spans residues 2-22; the sequence is EFGLREWLIVIGIIVIAGILF. The Cytoplasmic portion of the chain corresponds to 23 to 273; sequence DGWRRMRGGK…FERRQLTQKR (251 aa). Residues 65 to 125 are disordered; the sequence is EMEPQLDEDD…QEPKKSAKLS (61 aa). Residues 111-120 are compositionally biased toward basic and acidic residues; that stretch reads VDDKPQEPKK.

It belongs to the ZipA family. As to quaternary structure, interacts with FtsZ via their C-terminal domains.

It is found in the cell inner membrane. Its function is as follows. Essential cell division protein that stabilizes the FtsZ protofilaments by cross-linking them and that serves as a cytoplasmic membrane anchor for the Z ring. Also required for the recruitment to the septal ring of downstream cell division proteins. The sequence is that of Cell division protein ZipA from Ectopseudomonas mendocina (strain ymp) (Pseudomonas mendocina).